Here is a 146-residue protein sequence, read N- to C-terminus: Ribosome-binding factor A (146 aa).

The disordered stretch occupies residues 113-146 (IRDEREAQEPAQDPAQDSSQDASVEASDAPDKAE).

The protein belongs to the RbfA family. Monomer. Binds 30S ribosomal subunits, but not 50S ribosomal subunits or 70S ribosomes.

The protein localises to the cytoplasm. Its function is as follows. One of several proteins that assist in the late maturation steps of the functional core of the 30S ribosomal subunit. Associates with free 30S ribosomal subunits (but not with 30S subunits that are part of 70S ribosomes or polysomes). Required for efficient processing of 16S rRNA. May interact with the 5'-terminal helix region of 16S rRNA. In Gemmatimonas aurantiaca (strain DSM 14586 / JCM 11422 / NBRC 100505 / T-27), this protein is Ribosome-binding factor A.